The chain runs to 247 residues: Segregation and condensation protein A (247 aa).

Belongs to the ScpA family. Component of a cohesin-like complex composed of ScpA, ScpB and the Smc homodimer, in which ScpA and ScpB bind to the head domain of Smc. The presence of the three proteins is required for the association of the complex with DNA.

It localises to the cytoplasm. Participates in chromosomal partition during cell division. May act via the formation of a condensin-like complex containing Smc and ScpB that pull DNA away from mid-cell into both cell halves. The chain is Segregation and condensation protein A from Lactobacillus johnsonii (strain CNCM I-12250 / La1 / NCC 533).